A 507-amino-acid polypeptide reads, in one-letter code: ATP-dependent RNA helicase DDX47 (507 aa).

A compositionally biased stretch (acidic residues) spans 1 to 31 (MSETSEDEQTQLQTSDEEEDLGSEEEQEDED). A disordered region spans residues 1–58 (MSETSEDEQTQLQTSDEEEDLGSEEEQEDEDNNHKEGDSEAALSGEDDKGSEDDAAEE). The short motif at 61-89 (LTWKDLGLNEALCQACDELKWKAPSKIQR) is the Q motif element. A Helicase ATP-binding domain is found at 92–263 (IPVALQGKDV…RASLKDPVKV (172 aa)). ATP is bound at residue 105 to 112 (AETGSGKT). The DEAD box signature appears at 211–214 (DEAD). The 145-residue stretch at 290–434 (YLVHILNELA…LYKCEEDEVM (145 aa)) folds into the Helicase C-terminal domain. A coiled-coil region spans residues 426 to 453 (YKCEEDEVMALQERVAEAQRTAKLELKD). The span at 451-471 (LKDLEDTRGGHKRGGDTHDDS) shows a compositional bias: basic and acidic residues. The segment at 451-507 (LKDLEDTRGGHKRGGDTHDDSENFTGARKRMKPMGGTGGGGRKSFGKKNWSKGKQKR) is disordered. Positions 494-507 (SFGKKNWSKGKQKR) are enriched in basic residues.

It belongs to the DEAD box helicase family. DDX47/RRP3 subfamily.

The protein resides in the nucleus. Its subcellular location is the nucleolus. It catalyses the reaction ATP + H2O = ADP + phosphate + H(+). Functionally, part of a translational control module, also containing ath/DHX33 and ais/DDX52, which coordinates germline stem cell differentiation with ribosome biogenesis during oogenesis. This module allows for coregulation of ribosomal proteins and non1/GTPBP4, a p53 repressor, preventing p53 stabilization, cell cycle arrest and loss of stem cell differentiation. With atos, adjusts transcription and translation of a subset of OXPHOS genes in macrophages to increase mitochondrial bioenergetics and allow tissue invasion. This Drosophila melanogaster (Fruit fly) protein is ATP-dependent RNA helicase DDX47.